A 414-amino-acid polypeptide reads, in one-letter code: Enolase (414 aa).

Residue Q162 coordinates (2R)-2-phosphoglycerate. E204 (proton donor) is an active-site residue. 3 residues coordinate Mg(2+): D239, E280, and D307. (2R)-2-phosphoglycerate contacts are provided by K332, R361, S362, and K383. Residue K332 is the Proton acceptor of the active site.

Belongs to the enolase family. It depends on Mg(2+) as a cofactor.

The protein localises to the cytoplasm. The protein resides in the secreted. It localises to the cell surface. It carries out the reaction (2R)-2-phosphoglycerate = phosphoenolpyruvate + H2O. Its pathway is carbohydrate degradation; glycolysis; pyruvate from D-glyceraldehyde 3-phosphate: step 4/5. In terms of biological role, catalyzes the reversible conversion of 2-phosphoglycerate (2-PG) into phosphoenolpyruvate (PEP). It is essential for the degradation of carbohydrates via glycolysis. The polypeptide is Enolase (Campylobacter jejuni subsp. jejuni serotype O:2 (strain ATCC 700819 / NCTC 11168)).